A 445-amino-acid polypeptide reads, in one-letter code: MSRRKAGRVPRRVDPDTDTDIEMPDLVMDVKPDLDLRSLAQGPWIARDMPISDVKRQLQTASRPLGAPSTCAPRMPLSSKSSDRQPWTDKHPDLLTCGRCGKIFPLGAIIAFMDHKKQGCQLLQVSDPISESKELKALSCLQCGRQYTSPWKLLCHAQWDHGLCIYQTQHLDTPEAPLLGLAEVAAAMSAVAVVAPVESKPPPVSSAARRSPTCDVCKKTLSSFSNLKVHMRSHTGERPYSCDQCSYACAQSSKLNRHKKTHRQLAPGSPSTSASSRGVSPAAPPEPAAYAAAPASTLPSQTVEKAGAAATAGVQEPGAPGSGAQGGPGFVGWGAPAKVERTDPVKIEKTAPRKSHGPGGKCEFCGKSFTNSSNLTVHRRSHTGERPYTCDQCPYACAQSSKLNRHRRTHGLGTGKTVKCPHCLVPFGLQATLDKHLRQKHPEMA.

The span at 1-10 shows a compositional bias: basic residues; sequence MSRRKAGRVP. Residues 1–20 are disordered; it reads MSRRKAGRVPRRVDPDTDTD. K31 is covalently cross-linked (Glycyl lysine isopeptide (Lys-Gly) (interchain with G-Cter in SUMO2)). Residues 62–88 are disordered; sequence SRPLGAPSTCAPRMPLSSKSSDRQPWT. 3 consecutive C2H2-type zinc fingers follow at residues 138–161, 212–234, and 240–262; these read LSCLQCGRQYTSPWKLLCHAQWDH, PTCDVCKKTLSSFSNLKVHMRSH, and YSCDQCSYACAQSSKLNRHKKTH. The interval 256 to 359 is disordered; it reads NRHKKTHRQL…TAPRKSHGPG (104 aa). Over residues 269-278 the composition is skewed to polar residues; sequence SPSTSASSRG. Gly residues predominate over residues 320 to 332; sequence PGSGAQGGPGFVG. The segment covering 338–351 has biased composition (basic and acidic residues); that stretch reads KVERTDPVKIEKTA. C2H2-type zinc fingers lie at residues 360 to 382, 388 to 410, and 418 to 441; these read GKCEFCGKSFTNSSNLTVHRRSH, YTCDQCPYACAQSSKLNRHRRTH, and VKCPHCLVPFGLQATLDKHLRQKH.

Belongs to the krueppel C2H2-type zinc-finger protein family. As to quaternary structure, interacts with KLF4. As to expression, strongly expressed in testis and embryonic stem cells.

Its subcellular location is the nucleus. Its function is as follows. May be a transcriptional corepressor with KLF4. This chain is Zinc finger protein 296, found in Mus musculus (Mouse).